A 666-amino-acid polypeptide reads, in one-letter code: MTPTPDAPAAAAADAATGAGWLARRRGALARVALAPVAQAIGRVERVADGIAFVSGLEDTMLNEVLRFEGGVTGFAHTLDEDLISVVLLDPDAGVRAQTAVARTGAVLEVPAGPQLLGRVVDPLGRPLDGGAPLDAAHTLPIERAAPAIIERDLVSEPLDTGVLIVDALFTIGRGQRELIIGDRATGKTSLAIDAIVNQRHSDVICVYVAIGQRASAVRRVIDAVRRYGAPERCVFVVAPAACAPGLQWIAPFAGFSIAEYFRDRGQHALVVVDDLTKHAATHRELALLTREPPGREAYPGDIFYVHARLLERAAKLSAALGGGSLSALPIAETDAGNLAAYIPTNLISITDGQIVLDSALFAANQRPAVDVGLSVSRVGGKAQHPALRAASGRLRLDYAQFLELEAFTRFGGLTDARLRAQITRGERIRALITQPRFRALRTLDEVVLLKALAAGALDAMSPDLVAPLRERLPAWLDARIAALTPALAPPRDWLADDAALDALAESVGELIERIAADAARRATAGMPAEDAAGDIGGAFGGEQARGDADRDADHGANREVSREVSPEASREVSREVSCEVSHEADRDAAADAARVAGRAPGRAEPDRAAPRAMPDGPPRAQADGDRASASRPRPDARGDAARTAPSPQGGADANVDAEAEARHKR.

182 to 189 (GDRATGKT) is a binding site for ATP. The segment at 527–666 (MPAEDAAGDI…DAEAEARHKR (140 aa)) is disordered. Residues 545-590 (ARGDADRDADHGANREVSREVSPEASREVSREVSCEVSHEADRDAA) show a composition bias toward basic and acidic residues. Positions 591-601 (ADAARVAGRAP) are enriched in low complexity. Basic and acidic residues predominate over residues 623 to 641 (ADGDRASASRPRPDARGDA).

Belongs to the ATPase alpha/beta chains family. As to quaternary structure, F-type ATPases have 2 components, CF(1) - the catalytic core - and CF(0) - the membrane proton channel. CF(1) has five subunits: alpha(3), beta(3), gamma(1), delta(1), epsilon(1). CF(0) has three main subunits: a(1), b(2) and c(9-12). The alpha and beta chains form an alternating ring which encloses part of the gamma chain. CF(1) is attached to CF(0) by a central stalk formed by the gamma and epsilon chains, while a peripheral stalk is formed by the delta and b chains.

It is found in the cell inner membrane. The enzyme catalyses ATP + H2O + 4 H(+)(in) = ADP + phosphate + 5 H(+)(out). Functionally, produces ATP from ADP in the presence of a proton gradient across the membrane. The alpha chain is a regulatory subunit. The chain is ATP synthase subunit alpha 2 from Burkholderia pseudomallei (strain K96243).